A 510-amino-acid polypeptide reads, in one-letter code: Ribonuclease Y (510 aa).

The helical transmembrane segment at 2–22 (IYIIFSSIFAGFILGFLVRVF) threads the bilayer. Positions 198–258 (TVASVELPND…IRKELAKRTL (61 aa)) constitute a KH domain. One can recognise an HD domain in the interval 324–419 (VLSHSKETAI…VQIADAISAS (96 aa)).

This sequence belongs to the RNase Y family.

The protein resides in the cell membrane. Endoribonuclease that initiates mRNA decay. This Borreliella burgdorferi (strain ATCC 35210 / DSM 4680 / CIP 102532 / B31) (Borrelia burgdorferi) protein is Ribonuclease Y.